Reading from the N-terminus, the 259-residue chain is Phosphate import ATP-binding protein PstB (259 aa).

The ABC transporter domain maps to 10–254; it reads AESRNLSFYY…PSRKETEDYI (245 aa). ATP is bound at residue 43-50; that stretch reads GPSGCGKS.

The protein belongs to the ABC transporter superfamily. Phosphate importer (TC 3.A.1.7) family. The complex is composed of two ATP-binding proteins (PstB), two transmembrane proteins (PstC and PstA) and a solute-binding protein (PstS).

Its subcellular location is the cell inner membrane. The catalysed reaction is phosphate(out) + ATP + H2O = ADP + 2 phosphate(in) + H(+). Functionally, part of the ABC transporter complex PstSACB involved in phosphate import. Responsible for energy coupling to the transport system. This Methylobacillus flagellatus (strain ATCC 51484 / DSM 6875 / VKM B-1610 / KT) protein is Phosphate import ATP-binding protein PstB.